The sequence spans 82 residues: MIKLRLKRFGKKREASYRIVAAVSTSRRDGRPLEELGFYNPRTDEVRLDEEGIIRRLQQGAQPTDTVRSILTKQKIFEKINA.

The protein belongs to the bacterial ribosomal protein bS16 family.

This chain is Small ribosomal subunit protein bS16, found in Microcystis aeruginosa (strain NIES-843 / IAM M-2473).